A 20-amino-acid polypeptide reads, in one-letter code: ASGAKGDHGGAGASTXXLLT.

A disordered region spans residues 1-20 (ASGAKGDHGGAGASTXXLLT).

The protein belongs to the cytochrome c oxidase subunit 6A family. As to quaternary structure, component of the cytochrome c oxidase (complex IV, CIV), a multisubunit enzyme composed of 14 subunits. The complex is composed of a catalytic core of 3 subunits MT-CO1, MT-CO2 and MT-CO3, encoded in the mitochondrial DNA, and 11 supernumerary subunits COX4I, COX5A, COX5B, COX6A, COX6B, COX6C, COX7A, COX7B, COX7C, COX8 and NDUFA4, which are encoded in the nuclear genome. The complex exists as a monomer or a dimer and forms supercomplexes (SCs) in the inner mitochondrial membrane with NADH-ubiquinone oxidoreductase (complex I, CI) and ubiquinol-cytochrome c oxidoreductase (cytochrome b-c1 complex, complex III, CIII), resulting in different assemblies (supercomplex SCI(1)III(2)IV(1) and megacomplex MCI(2)III(2)IV(2)). As to expression, heart specific isoform.

It localises to the mitochondrion inner membrane. It participates in energy metabolism; oxidative phosphorylation. Functionally, component of the cytochrome c oxidase, the last enzyme in the mitochondrial electron transport chain which drives oxidative phosphorylation. The respiratory chain contains 3 multisubunit complexes succinate dehydrogenase (complex II, CII), ubiquinol-cytochrome c oxidoreductase (cytochrome b-c1 complex, complex III, CIII) and cytochrome c oxidase (complex IV, CIV), that cooperate to transfer electrons derived from NADH and succinate to molecular oxygen, creating an electrochemical gradient over the inner membrane that drives transmembrane transport and the ATP synthase. Cytochrome c oxidase is the component of the respiratory chain that catalyzes the reduction of oxygen to water. Electrons originating from reduced cytochrome c in the intermembrane space (IMS) are transferred via the dinuclear copper A center (CU(A)) of subunit 2 and heme A of subunit 1 to the active site in subunit 1, a binuclear center (BNC) formed by heme A3 and copper B (CU(B)). The BNC reduces molecular oxygen to 2 water molecules unsing 4 electrons from cytochrome c in the IMS and 4 protons from the mitochondrial matrix. Plays a role in the assembly and stabilization of complex IV. This is Cytochrome c oxidase subunit 6A2, mitochondrial (COX6A2) from Canis lupus familiaris (Dog).